The following is a 265-amino-acid chain: Undecaprenyl-diphosphatase (265 aa).

A run of 8 helical transmembrane segments spans residues 1 to 21, 39 to 59, 84 to 104, 114 to 134, 144 to 164, 187 to 207, 218 to 238, and 244 to 264; these read MDIFQALFLGLLQGLTEFLPI, QGVGFDLSVHVGTLLAVVLYF, ALAWYLVIGTIPAGLAGLALL, ASVIFFTTLVFGILLGIADWL, LNWKDAVIVGIAQAMALVPGT, FSFLLAIPIIVLASAVKLLEV, GFLIGGVTSFLMAITAIHFFL, and VGMWPYVIYRIILAGVIYAVL.

This sequence belongs to the UppP family.

The protein localises to the cell inner membrane. It carries out the reaction di-trans,octa-cis-undecaprenyl diphosphate + H2O = di-trans,octa-cis-undecaprenyl phosphate + phosphate + H(+). Its function is as follows. Catalyzes the dephosphorylation of undecaprenyl diphosphate (UPP). Confers resistance to bacitracin. This is Undecaprenyl-diphosphatase from Marinobacter nauticus (strain ATCC 700491 / DSM 11845 / VT8) (Marinobacter aquaeolei).